A 177-amino-acid chain; its full sequence is MSRVGKAPIALPKGAEVNVAAGVLSVKGPLGTLSQPIHSLVKVNVAEGTLTFEPADESREANALQGTMRALAANMVKGVTTGFERKLQLVGVGYRAQLQGAALKLQLGFSHDVIHEMPEGVKAETPTQTEIIIKGADKQKVGQVAAEVRAYRPPEPYKGKGVRYADERVILKETKKK.

The protein belongs to the universal ribosomal protein uL6 family. Part of the 50S ribosomal subunit.

This protein binds to the 23S rRNA, and is important in its secondary structure. It is located near the subunit interface in the base of the L7/L12 stalk, and near the tRNA binding site of the peptidyltransferase center. This chain is Large ribosomal subunit protein uL6, found in Cupriavidus metallidurans (strain ATCC 43123 / DSM 2839 / NBRC 102507 / CH34) (Ralstonia metallidurans).